The sequence spans 68 residues: U-actitoxin-Avt1 (68 aa).

A signal peptide spans 1-22; sequence MNSKAIISVFLIMLVVVSCTQA. A propeptide spanning residues 23–40 is cleaved from the precursor; it reads TYETEDDDEPGPRHSEKR. Positions 24–50 are disordered; the sequence is YETEDDDEPGPRHSEKRSCARGCGGDS. Basic and acidic residues predominate over residues 32–41; sequence PGPRHSEKRS. 3 disulfide bridges follow: Cys-42–Cys-54, Cys-46–Cys-59, and Cys-52–Cys-66.

In terms of biological role, stable protein with probable toxin activity. Does not show activity on all channels tested. Shows no hemolytic activity on rat erythrocytes. The chain is U-actitoxin-Avt1 from Aulactinia veratra (Green snakelock anemone).